The sequence spans 133 residues: Small ribosomal subunit protein uS8 (133 aa).

This sequence belongs to the universal ribosomal protein uS8 family. Part of the 30S ribosomal subunit. Contacts proteins S5 and S12.

Its function is as follows. One of the primary rRNA binding proteins, it binds directly to 16S rRNA central domain where it helps coordinate assembly of the platform of the 30S subunit. The chain is Small ribosomal subunit protein uS8 from Prochlorococcus marinus (strain MIT 9301).